A 279-amino-acid chain; its full sequence is Energy-coupling factor transporter ATP-binding protein EcfA (279 aa).

The region spanning I5–D240 is the ABC transporter domain. An ATP-binding site is contributed by G40–S47.

Belongs to the ABC transporter superfamily. Energy-coupling factor EcfA family. In terms of assembly, forms a stable energy-coupling factor (ECF) transporter complex composed of 2 membrane-embedded substrate-binding proteins (S component), 2 ATP-binding proteins (A component) and 2 transmembrane proteins (T component).

The protein localises to the cell membrane. Its function is as follows. ATP-binding (A) component of a common energy-coupling factor (ECF) ABC-transporter complex. Unlike classic ABC transporters this ECF transporter provides the energy necessary to transport a number of different substrates. The sequence is that of Energy-coupling factor transporter ATP-binding protein EcfA from Enterococcus faecium (Streptococcus faecium).